Here is a 158-residue protein sequence, read N- to C-terminus: NADPH-dependent 7-cyano-7-deazaguanine reductase (158 aa).

The Thioimide intermediate role is filled by C56. D63 acts as the Proton donor in catalysis. Substrate-binding positions include 78–80 (LES) and 97–98 (HE).

Belongs to the GTP cyclohydrolase I family. QueF type 1 subfamily.

The protein resides in the cytoplasm. It catalyses the reaction 7-aminomethyl-7-carbaguanine + 2 NADP(+) = 7-cyano-7-deazaguanine + 2 NADPH + 3 H(+). The protein operates within tRNA modification; tRNA-queuosine biosynthesis. Functionally, catalyzes the NADPH-dependent reduction of 7-cyano-7-deazaguanine (preQ0) to 7-aminomethyl-7-deazaguanine (preQ1). This is NADPH-dependent 7-cyano-7-deazaguanine reductase from Nitrobacter winogradskyi (strain ATCC 25391 / DSM 10237 / CIP 104748 / NCIMB 11846 / Nb-255).